The chain runs to 480 residues: Transmembrane protein 161A (480 aa).

The signal sequence occupies residues 1 to 28 (MAVLGVQLVVTLFTATLMHRLAPHCSFA). Over 29 to 98 (RWLLCNGSLF…LTAVDALVLR (70 aa)) the chain is Extracellular. N-linked (GlcNAc...) asparagine glycosylation occurs at N34. The helical transmembrane segment at 99 to 119 (FFLEYQWFVDFAVYSVGVYLF) threads the bilayer. Residues 120-134 (TEAYYFVLGPVQETN) lie on the Cytoplasmic side of the membrane. The chain crosses the membrane as a helical span at residues 135–155 (IAVFWCLLTLAFSLKVFLMVT). At 156-166 (RLYFSTKEGGE) the chain is on the extracellular side. A helical membrane pass occupies residues 167–187 (RSVCLSFAFLFLLLAMLVQVV). Over 188 to 224 (REETLELGLEPGLASMTQHLEPILKKQDWDWTLPVIK) the chain is Cytoplasmic. Residues 225–245 (LAIRLGLAVLGSLLGAFLIFP) traverse the membrane as a helical segment. Residues 246-263 (GLRLAQTHQDALTLSADR) lie on the Extracellular side of the membrane. The chain crosses the membrane as a helical span at residues 264–284 (PLLQLLLHTSFLSPLCTLWLW). Residues 285 to 304 (TKPVARDFLYQAPTRNMTFS) are Cytoplasmic-facing. A helical transmembrane segment spans residues 305–325 (VPSEGAFDSLRLWVLVALCLL). The Extracellular portion of the chain corresponds to 326–370 (RLAVTRPHLQAYLCLAKARVEQLRKEAGRIEAREIQQRVVRVYCY). Residues 371–391 (VTVVSLQYLTPLILTLHCTLL) traverse the membrane as a helical segment. Over 392-450 (LKTLGGYSWALSSTPPPLAPSQPSEALIPVDPAGDEAQQTAAQVAGILGGLLTPLFLRG) the chain is Cytoplasmic. A helical membrane pass occupies residues 451 to 473 (MLAYIIWWTAACQLLSSLFGLYF). At 474 to 480 (HQHLAAS) the chain is on the extracellular side.

It belongs to the TMEM161 family.

The protein resides in the membrane. Its function is as follows. May play a role in protection against oxidative stress. Overexpression leads to reduced levels of oxidant-induced DNA damage and apoptosis. This Mus musculus (Mouse) protein is Transmembrane protein 161A (Tmem161a).